The following is a 406-amino-acid chain: Acetylornithine/succinyldiaminopimelate aminotransferase (406 aa).

Residues 108–109 (GT) and F141 each bind pyridoxal 5'-phosphate. N(2)-acetyl-L-ornithine is bound at residue R144. 226-229 (DEVQ) is a binding site for pyridoxal 5'-phosphate. At K255 the chain carries N6-(pyridoxal phosphate)lysine. S283 lines the N(2)-acetyl-L-ornithine pocket. T284 contacts pyridoxal 5'-phosphate.

The protein belongs to the class-III pyridoxal-phosphate-dependent aminotransferase family. ArgD subfamily. In terms of assembly, homodimer. It depends on pyridoxal 5'-phosphate as a cofactor.

It is found in the cytoplasm. The catalysed reaction is N(2)-acetyl-L-ornithine + 2-oxoglutarate = N-acetyl-L-glutamate 5-semialdehyde + L-glutamate. It carries out the reaction N-succinyl-(2S,6S)-2,6-diaminopimelate + 2-oxoglutarate = (S)-2-succinylamino-6-oxoheptanedioate + L-glutamate. It functions in the pathway amino-acid biosynthesis; L-arginine biosynthesis; N(2)-acetyl-L-ornithine from L-glutamate: step 4/4. Its pathway is amino-acid biosynthesis; L-lysine biosynthesis via DAP pathway; LL-2,6-diaminopimelate from (S)-tetrahydrodipicolinate (succinylase route): step 2/3. Functionally, involved in both the arginine and lysine biosynthetic pathways. The chain is Acetylornithine/succinyldiaminopimelate aminotransferase from Escherichia coli (strain K12).